The primary structure comprises 428 residues: GTPase Obg (428 aa).

Positions 1–158 (MFIDQVKIYV…RDVILELKVL (158 aa)) constitute an Obg domain. An OBG-type G domain is found at 159-329 (ADVGLVGFPS…LLFEVANLIE (171 aa)). GTP contacts are provided by residues 165–172 (GFPSVGKS), 190–194 (FTTIV), 212–215 (DLPG), 282–285 (NKMD), and 310–312 (SAV). The Mg(2+) site is built by Ser-172 and Thr-192. The 79-residue stretch at 350-428 (KFETEGVKFD…ILEYEFEFID (79 aa)) folds into the OCT domain.

Belongs to the TRAFAC class OBG-HflX-like GTPase superfamily. OBG GTPase family. Monomer. Mg(2+) is required as a cofactor.

The protein localises to the cytoplasm. An essential GTPase which binds GTP, GDP and possibly (p)ppGpp with moderate affinity, with high nucleotide exchange rates and a fairly low GTP hydrolysis rate. Plays a role in control of the cell cycle, stress response, ribosome biogenesis and in those bacteria that undergo differentiation, in morphogenesis control. The polypeptide is GTPase Obg (Bacillus anthracis).